The chain runs to 152 residues: Actin-related protein 2/3 complex subunit 5-B (152 aa).

The tract at residues 21 to 44 (NKFVDDQLQEEPAEPQGPDEAEVD) is disordered. A compositionally biased stretch (acidic residues) spans 27-43 (QLQEEPAEPQGPDEAEV).

Belongs to the ARPC5 family. In terms of assembly, component of the Arp2/3 complex composed of actr2/arp2, actr3/arp3, arpc1 (arpc1a or arpc1b), arpc2, arpc3, arpc4 and arpc5.

It localises to the cytoplasm. It is found in the cytoskeleton. Its subcellular location is the cell projection. The protein localises to the nucleus. In terms of biological role, component of the Arp2/3 complex, a multiprotein complex that mediates actin polymerization upon stimulation by nucleation-promoting factor (NPF). The Arp2/3 complex mediates the formation of branched actin networks in the cytoplasm, providing the force for cell motility. In addition to its role in the cytoplasmic cytoskeleton, the Arp2/3 complex also promotes actin polymerization in the nucleus, thereby regulating gene transcription and repair of damaged DNA. The Arp2/3 complex promotes homologous recombination (HR) repair in response to DNA damage by promoting nuclear actin polymerization, leading to drive motility of double-strand breaks (DSBs). This chain is Actin-related protein 2/3 complex subunit 5-B (arpc5-b), found in Xenopus laevis (African clawed frog).